The chain runs to 436 residues: FAD-dependent monooxygenase pigN (436 aa).

Residues Glu40, Gly53, and Arg118 each contribute to the FAD site. The active site involves Arg200. FAD-binding residues include Asp316 and Ala329.

This sequence belongs to the paxM FAD-dependent monooxygenase family. The cofactor is FAD.

Its pathway is secondary metabolite biosynthesis. FAD-dependent monooxygenase; part of the gene cluster that mediates the biosynthesis of azaphilone pigments (MonAzPs), a complex mixture of compounds with a common azaphilone skeleton very widely used as food colorants. Within the pathway, pigN hydroxylates the benzaldehyde M7PKS-1 intermediate at C-4 to form the pyran ring. The first step of the pathway is performed by the nrPKS pigA that forms the hexaketide precursor from successive condensations of five malonyl-CoA units, with a simple acetyl-CoA starter unit. The role of esterase pigG is not clear, but it may play at most a supplementary role in the formation of the benzaldehyde produced by the pigA nrPKS. This very reactive benzaldehyde is intercepted by the pigC ketoreductase that to provide the first stable enzyme-free MonAzPs intermediate, 6-(4-hydroxy-2-oxopentyl)-3-methyl-2,4-dioxocyclohexane carbaldehyde, also known as M7PKS-1. The FAD-dependent monooxygenase pigN hydroxylates M7PKS-1 at C-4, which triggers the formation of the pyran ring. PigJ, pigK and pigD are involved in the acetylation of the pyran ring. PigJ and pigK form the two subunits of a dedicated fungal FAS that produces the side chain fatty acyl moiety of MonAzPs and pigD transfers the fatty acyl chain to the C-4 alcohol. PigM and pigO are involved in the elimination of the omega-1 alcohol. PigM acts as an O-acetyltransferase that synthesizes the putative O-11 acetyl intermediate whereas pigO eliminates acetic acid to yield an intermediate with a C10(11) double bond. The dehydration of the C-11 alcohol followed by the reduction of the C6(7) double bond by the NAD(P)H-dependent oxidoreductase pigE increases the electrophilicity of the C-5 ketone of the resulting acyl benzopyran. This in turn sets up the C-5 ketone for an intramolecular Knoevenagel aldol condensation with the C-20 enol of the side chain. This condensation affords the characteristic linear tricyclic carbon skeletons of the yellow pigments that serve as the common precursors for the classical yellow pigments monascin and ankaflavin, orange pigments rubopunctatin and monascorubrin, and red pigments ribropunctamine and monascorubramine. The FAD-dependent oxidoreductase pigF is especially invoved in the biosynthesis of orange and red pigments via desaturation of C6(7). The protein is FAD-dependent monooxygenase pigN of Monascus ruber (Mold).